The chain runs to 628 residues: (+)-alpha-pinene synthase, chloroplastic (628 aa).

Residues 1-48 (MALVSAVPLNSKLCLRRTLFGFSHELKAIHSTVPNLGMCRGGKSIAPS) constitute a chloroplast transit peptide. Aspartate 379, aspartate 383, and aspartate 531 together coordinate Mg(2+). Residues 379–383 (DDIYD) carry the DDXXD motif motif. Serine 539 contributes to the K(+) binding site.

It belongs to the terpene synthase family. Tpsd subfamily. Mg(2+) is required as a cofactor. It depends on Mn(2+) as a cofactor. K(+) serves as cofactor.

It is found in the plastid. It localises to the chloroplast. It catalyses the reaction (2E)-geranyl diphosphate = (1R,5R)-alpha-pinene + diphosphate. The protein operates within terpene metabolism; oleoresin biosynthesis. In terms of biological role, involved in defensive oleoresin formation in conifers in response to insect attack or other injury. Involved in monoterpene (C10) olefins biosynthesis. Produces mainly (+)-alpha-pinene (97%) with a small amount of (-)-alpha-pinene (3%). The sequence is that of (+)-alpha-pinene synthase, chloroplastic (PT30) from Pinus taeda (Loblolly pine).